The chain runs to 129 residues: Large ribosomal subunit protein bL12c (129 aa).

It belongs to the bacterial ribosomal protein bL12 family. As to quaternary structure, homodimer. Part of the ribosomal stalk of the 50S ribosomal subunit. Forms a multimeric L10(L12)X complex, where L10 forms an elongated spine to which 2 to 4 L12 dimers bind in a sequential fashion. Binds GTP-bound translation factors.

It localises to the plastid. The protein localises to the chloroplast. Its function is as follows. Forms part of the ribosomal stalk which helps the ribosome interact with GTP-bound translation factors. Is thus essential for accurate translation. The polypeptide is Large ribosomal subunit protein bL12c (Oltmannsiellopsis viridis (Marine flagellate)).